Consider the following 184-residue polypeptide: Large ribosomal subunit protein uL5 (184 aa).

The protein belongs to the universal ribosomal protein uL5 family. Part of the 50S ribosomal subunit; part of the 5S rRNA/L5/L18/L25 subcomplex. Contacts the 5S rRNA and the P site tRNA. Forms a bridge to the 30S subunit in the 70S ribosome.

Its function is as follows. This is one of the proteins that bind and probably mediate the attachment of the 5S RNA into the large ribosomal subunit, where it forms part of the central protuberance. In the 70S ribosome it contacts protein S13 of the 30S subunit (bridge B1b), connecting the 2 subunits; this bridge is implicated in subunit movement. Contacts the P site tRNA; the 5S rRNA and some of its associated proteins might help stabilize positioning of ribosome-bound tRNAs. In Thermotoga maritima (strain ATCC 43589 / DSM 3109 / JCM 10099 / NBRC 100826 / MSB8), this protein is Large ribosomal subunit protein uL5.